A 63-amino-acid polypeptide reads, in one-letter code: Trypsin inhibitor 5 (63 aa).

An N-terminal signal peptide occupies residues 1 to 21 (MASVAESSGVVEVIELISDGG). A propeptide spanning residues 22 to 34 (NDLPRKIMSGRHG) is cleaved from the precursor. Intrachain disulfides connect Cys37-Cys54, Cys44-Cys56, and Cys50-Cys62.

It belongs to the protease inhibitor I7 (squash-type serine protease inhibitor) family.

It localises to the secreted. In terms of biological role, inhibits trypsin. In Luffa aegyptiaca (Sponge gourd), this protein is Trypsin inhibitor 5.